The sequence spans 1349 residues: MEELFNFFQKPKGPVKFNKVKISLASPEQIIDWSHGEVKKPETINYRTFKPERDGLFCAKVFGPVKDFECNCGKYKRMKHRGVVCEKCGVEVIQSKVRRERLGHISLAAPVAHIWFLKSLPSKIGAVLDMTLKQLEKVLYFENYAVTQSEVEELPLGTLLTEEKYRQALSEYPAQFKVGIGAEAIRELLAAQDLIGLSRVLREEMASTSSQTKRQKLGKRLFVIEAFRDSGNKPEWMILQVIPVLPPDLRPLVPLEGGRFATSDLNDLYRRVINRNNRLKRLLELDAPDIIIRNEKRMLQESVDVLFDNGRRGRVITGANKRPLKSLSDMLKGKQGRFRQNLLGKRVDYSGRSVIVVGPHLRLHQCGIPKKMALELFKPFIYNRLERKGLVTTIKSARKMVEKGAKEVWDVLEEVVTEYPVILNRAPTLHRLGMQAFEAVLIEGKAIRLHPLVCMAFNADFDGDQMAVHVPLSVEAQVEARVLMMSTNNILSPANGEPVIIPSQDIVLGLYYMTRERINVKGEGRVFSSVDEAIISYDYKETDLQAKVKVRRPEGIVDTTMGRIILGELVPKSVPFVEVNKVMSKKALAALIDYTYRHAGTKDTVILADRLKDTGYEYATRAGISICIDDMKIPATKVGLVKKGEDEVLDVEQQYSDGLITAGEKYNKVIDIWSKVSEDVANEMMDEIKTETFEDKDGNLVEGPSFNSIFVMADSGARGSRDQIRQLAGMRGLMAKPSGAIIETPIKANFREGLDVLEYFISTHGARKGLADTALKTANSGYLTRRLVDVAQEATIVEADCQTLDGIVAEPLLDGGEVLVPLGDRILGRVALEDVVDPFTGEVLVVAGEQMEEDKVAILEEAGIDRVMIRSVLTCRSKRGVCAACYGRDLGRGHLINQGEAVGVIAAQSIGEPGTQLTMRTFHIGGTASRSVEQAEIRTHRGGKVAFNNLHYVENSSGVKIVMNRNAEIFVKDEFGRDREKFKVNYGAQVLVKEGEDIERDTVLADWDAYTIPIVAEVGGIIRYGDIFNGITMQEKVDPVTGKSSMVIVHSAGGVTLNPRISVKNDRGKTLKLPDSEGFARYSLPVGSLISVEEGAEIKAGTIVGKIPRETSKTKDITGGLPRVAELFEVRKPKDPAIIARIDGKVSFGKELKGKRRVVVTPEYGEQQEYLVPKAKHIIVHEGDYVQAGEPLMEGTIVPNDILSVLGVKALAKFLVDEIQEVYRLQGVKINDKHIEVIVRQMLKRVHITRANDSKFMIGENVEWWKFEEERDRLLAEGKKPGAAEPLLLGVTKASLSTESFISAASFQETTKVLTNAAMSGRVDELLGLKENVIMGRLISAGTGINRVD.

The Zn(2+) site is built by C70, C72, C85, and C88. Mg(2+)-binding residues include D460, D462, and D464. 4 residues coordinate Zn(2+): C801, C875, C882, and C885.

This sequence belongs to the RNA polymerase beta' chain family. As to quaternary structure, the RNAP catalytic core consists of 2 alpha, 1 beta, 1 beta' and 1 omega subunit. When a sigma factor is associated with the core the holoenzyme is formed, which can initiate transcription. It depends on Mg(2+) as a cofactor. The cofactor is Zn(2+).

It catalyses the reaction RNA(n) + a ribonucleoside 5'-triphosphate = RNA(n+1) + diphosphate. In terms of biological role, DNA-dependent RNA polymerase catalyzes the transcription of DNA into RNA using the four ribonucleoside triphosphates as substrates. This Desulfotalea psychrophila (strain LSv54 / DSM 12343) protein is DNA-directed RNA polymerase subunit beta'.